The following is a 201-amino-acid chain: UPF0301 protein Atu0781 (201 aa).

It belongs to the UPF0301 (AlgH) family.

The chain is UPF0301 protein Atu0781 from Agrobacterium fabrum (strain C58 / ATCC 33970) (Agrobacterium tumefaciens (strain C58)).